Reading from the N-terminus, the 467-residue chain is 26S proteasome regulatory subunit 7 homolog (467 aa).

Disordered stretches follow at residues 1–26 (MPPKEDWEKYKAPLEDDDKKPDDDKI) and 108–140 (GNGESDETTTDNNNSGNSNSNSNQQSTDADEDD). The segment covering 117–134 (TDNNNSGNSNSNSNQQST) has biased composition (low complexity). Serine 164 and serine 231 each carry phosphoserine. 250-257 (GPPGTGKT) is an ATP binding site.

Belongs to the AAA ATPase family. As to quaternary structure, interacts with UBR1 and CIC1. The N-terminus is blocked.

It localises to the cytoplasm. Its subcellular location is the nucleus. Its function is as follows. The 26S proteasome is involved in the ATP-dependent degradation of ubiquitinated proteins. The regulatory (or ATPase) complex confers ATP dependency and substrate specificity to the 26S complex. The protein is 26S proteasome regulatory subunit 7 homolog (RPT1) of Saccharomyces cerevisiae (strain ATCC 204508 / S288c) (Baker's yeast).